Here is a 673-residue protein sequence, read N- to C-terminus: UvrABC system protein B (673 aa).

The region spanning 24-182 (EGVERNDPAQ…YSFVEILYNR (159 aa)) is the Helicase ATP-binding domain. ATP is bound at residue 37–44 (GVTGSGKT). The Beta-hairpin motif lies at 90-113 (YYDYYQPEAFMPTSGLYIEKDLAI). One can recognise a Helicase C-terminal domain in the interval 429–591 (QIDDLLDEIQ…ITPITVNKSK (163 aa)). Residues 634 to 669 (TKMIDRAKKDMDKAAKDLDFVEAARYRDEMFALQKI) enclose the UVR domain.

This sequence belongs to the UvrB family. As to quaternary structure, forms a heterotetramer with UvrA during the search for lesions. Interacts with UvrC in an incision complex.

Its subcellular location is the cytoplasm. Its function is as follows. The UvrABC repair system catalyzes the recognition and processing of DNA lesions. A damage recognition complex composed of 2 UvrA and 2 UvrB subunits scans DNA for abnormalities. Upon binding of the UvrA(2)B(2) complex to a putative damaged site, the DNA wraps around one UvrB monomer. DNA wrap is dependent on ATP binding by UvrB and probably causes local melting of the DNA helix, facilitating insertion of UvrB beta-hairpin between the DNA strands. Then UvrB probes one DNA strand for the presence of a lesion. If a lesion is found the UvrA subunits dissociate and the UvrB-DNA preincision complex is formed. This complex is subsequently bound by UvrC and the second UvrB is released. If no lesion is found, the DNA wraps around the other UvrB subunit that will check the other stand for damage. The sequence is that of UvrABC system protein B from Cytophaga hutchinsonii (strain ATCC 33406 / DSM 1761 / CIP 103989 / NBRC 15051 / NCIMB 9469 / D465).